The primary structure comprises 941 residues: Cell wall protein IFF3 (941 aa).

An N-terminal signal peptide occupies residues 1–20 (MQLFQNILVSIALLTQVVFA). Asn36, Asn367, Asn686, Asn732, Asn790, Asn818, Asn825, Asn884, and Asn917 each carry an N-linked (GlcNAc...) asparagine glycan. Asn917 carries the GPI-anchor amidated asparagine lipid modification. A propeptide spans 918-941 (GSNKESIENIKYLTLVVFGLMMFM) (removed in mature form).

It belongs to the HYR1/IFF family. Post-translationally, the GPI-anchor is attached to the protein in the endoplasmic reticulum and serves to target the protein to the cell surface. There, the glucosamine-inositol phospholipid moiety is cleaved off and the GPI-modified mannoprotein is covalently attached via its lipidless GPI glycan remnant to the 1,6-beta-glucan of the outer cell wall layer.

Its subcellular location is the secreted. It localises to the cell wall. The protein localises to the membrane. In terms of biological role, GPI-anchored cell wall protein involved in cell wall organization, hyphal growth, as well as in host-fungal interaction and virulence. The polypeptide is Cell wall protein IFF3 (IFF3) (Candida albicans (strain SC5314 / ATCC MYA-2876) (Yeast)).